Reading from the N-terminus, the 111-residue chain is V-type proton ATPase subunit G 2 (111 aa).

Belongs to the V-ATPase G subunit family. V-ATPase is a heteromultimeric enzyme composed of a peripheral catalytic V1 complex (components A to H) attached to an integral membrane V0 proton pore complex (components: a, c, c', c'' and d).

Catalytic subunit of the peripheral V1 complex of vacuolar ATPase (V-ATPase). V-ATPase is responsible for acidifying a variety of intracellular compartments in eukaryotic cells. The chain is V-type proton ATPase subunit G 2 (VATG2) from Nicotiana tabacum (Common tobacco).